The chain runs to 433 residues: Histidinol dehydrogenase 2 (433 aa).

NAD(+)-binding residues include Y130, Q192, and N215. 3 residues coordinate substrate: S238, Q260, and H263. Zn(2+) is bound by residues Q260 and H263. Residues E328 and H329 each act as proton acceptor in the active site. The substrate site is built by H329, D362, E416, and H421. Zn(2+) is bound at residue D362. A Zn(2+)-binding site is contributed by H421.

It belongs to the histidinol dehydrogenase family. Requires Zn(2+) as cofactor.

It catalyses the reaction L-histidinol + 2 NAD(+) + H2O = L-histidine + 2 NADH + 3 H(+). It participates in amino-acid biosynthesis; L-histidine biosynthesis; L-histidine from 5-phospho-alpha-D-ribose 1-diphosphate: step 9/9. Its function is as follows. Catalyzes the sequential NAD-dependent oxidations of L-histidinol to L-histidinaldehyde and then to L-histidine. This is Histidinol dehydrogenase 2 (hisD2) from Nostoc sp. (strain PCC 7120 / SAG 25.82 / UTEX 2576).